The primary structure comprises 588 residues: UDP-N-acetylmuramate--L-alanine ligase (588 aa).

An ATP-binding site is contributed by 119–125 (GSHGKST). The segment covering 344-371 (VPAAAGAAAAPPVRRDPATAAAAATTAP) has biased composition (low complexity). A disordered region spans residues 344–411 (VPAAAGAAAA…APAAGPDHAA (68 aa)). The span at 372–381 (IGPPDSPPPT) shows a compositional bias: pro residues. Over residues 382–411 (GIALPRAAPPAVDAPVAATPAPAAGPDHAA) the composition is skewed to low complexity.

Belongs to the MurCDEF family.

Its subcellular location is the cytoplasm. It catalyses the reaction UDP-N-acetyl-alpha-D-muramate + L-alanine + ATP = UDP-N-acetyl-alpha-D-muramoyl-L-alanine + ADP + phosphate + H(+). Its pathway is cell wall biogenesis; peptidoglycan biosynthesis. Its function is as follows. Cell wall formation. This Frankia alni (strain DSM 45986 / CECT 9034 / ACN14a) protein is UDP-N-acetylmuramate--L-alanine ligase.